Here is a 153-residue protein sequence, read N- to C-terminus: Small ribosomal subunit protein eS19 (153 aa).

Disordered regions lie at residues 77–99 and 113–139; these read YGTS…KGSG and GYVE…TAGD. Basic and acidic residues predominate over residues 120–133; that stretch reads NDGRRVTGDGRSLL.

It belongs to the eukaryotic ribosomal protein eS19 family. Part of the 30S ribosomal subunit.

May be involved in maturation of the 30S ribosomal subunit. This Haloarcula marismortui (strain ATCC 43049 / DSM 3752 / JCM 8966 / VKM B-1809) (Halobacterium marismortui) protein is Small ribosomal subunit protein eS19.